Reading from the N-terminus, the 41-residue chain is Giant hemoglobin AI chain (41 aa).

Residues 2 to 41 form the Globin domain; the sequence is DCGMLQRIKVKQQWASVYSSGIAREDFGEAIWKAVFALAP.

Belongs to the globin family. Giant hemoglobin is composed of four heme-containing chains (AI to AIV), and two linker chains (AV and AVI).

The polypeptide is Giant hemoglobin AI chain (Lamellibrachia sp. (Deep-sea giant tube worm)).